The primary structure comprises 313 residues: Cytochrome c biogenesis protein CcsA (313 aa).

A run of 8 helical transmembrane segments spans residues 9–29, 44–64, 71–91, 111–131, 143–163, 217–237, 244–264, and 278–298; these read ILTH…LITF, GIIV…ISSG, LYES…IPYF, GFAT…VPAL, MILG…LLVI, VISL…VWAN, WNWD…AIYL, and AIVA…VNLL.

The protein belongs to the CcmF/CycK/Ccl1/NrfE/CcsA family. May interact with Ccs1.

It localises to the plastid. The protein resides in the chloroplast thylakoid membrane. In terms of biological role, required during biogenesis of c-type cytochromes (cytochrome c6 and cytochrome f) at the step of heme attachment. The sequence is that of Cytochrome c biogenesis protein CcsA from Solanum bulbocastanum (Wild potato).